Consider the following 330-residue polypeptide: MQERTYDITIIGGGPVGLFAAFYAGLRGMTVKIIESLSELGGQPAVLYPEKVIYDIPAYPALTGAELTQKLIEQLSRFDDRIAVCLKEEVLSFEKVDGDFVIQTSKARHYSKAIIVACGNGAFAPRTLGLDNEQLFADHNLFYNVHSLNQFAGKRVVICGGGDSAVDWALALDGLAKSVTLVHRRDAFRAHEHSVELLKNSHVTTLTPFVPLALEGENGFVNKMTIQKVKSEEEITLELDSLIVSFGFSTSNKNLKHWNLDYKRSSLLVSPLFQTSQEGIFAIGDAAAYEGRVDLIATGFGEAPIAVNQAIKYIYPDRDNRPVHSTALID.

Positions 35, 43, 48, 90, 123, 285, and 326 each coordinate FAD.

Belongs to the ferredoxin--NADP reductase type 2 family. As to quaternary structure, homodimer. Requires FAD as cofactor.

It catalyses the reaction 2 reduced [2Fe-2S]-[ferredoxin] + NADP(+) + H(+) = 2 oxidized [2Fe-2S]-[ferredoxin] + NADPH. The chain is Ferredoxin--NADP reductase from Streptococcus equi subsp. zooepidemicus (strain MGCS10565).